The following is an 89-amino-acid chain: Large ribosomal subunit protein bL27 (89 aa).

The interval 1–26 is disordered; the sequence is MAHKKAGGSSRNGRDSAGQRRGVKRF.

This sequence belongs to the bacterial ribosomal protein bL27 family.

The protein is Large ribosomal subunit protein bL27 of Nitratidesulfovibrio vulgaris (strain DSM 19637 / Miyazaki F) (Desulfovibrio vulgaris).